The following is a 505-amino-acid chain: Lysine--tRNA ligase (505 aa).

The Mg(2+) site is built by glutamate 415 and glutamate 422.

This sequence belongs to the class-II aminoacyl-tRNA synthetase family. Homodimer. The cofactor is Mg(2+).

The protein resides in the cytoplasm. The enzyme catalyses tRNA(Lys) + L-lysine + ATP = L-lysyl-tRNA(Lys) + AMP + diphosphate. This is Lysine--tRNA ligase from Yersinia pseudotuberculosis serotype O:1b (strain IP 31758).